The following is a 385-amino-acid chain: tRNA (guanine(26)-N(2))-dimethyltransferase (385 aa).

The 379-residue stretch at 1 to 379 (MNITEGVVEL…ATIAEIRSAT (379 aa)) folds into the Trm1 methyltransferase domain. Positions 37, 67, 82, 108, and 109 each coordinate S-adenosyl-L-methionine. 4 residues coordinate Zn(2+): cysteine 247, cysteine 250, cysteine 267, and cysteine 270.

Belongs to the class I-like SAM-binding methyltransferase superfamily. Trm1 family.

The enzyme catalyses guanosine(26) in tRNA + 2 S-adenosyl-L-methionine = N(2)-dimethylguanosine(26) in tRNA + 2 S-adenosyl-L-homocysteine + 2 H(+). In terms of biological role, dimethylates a single guanine residue at position 26 of a number of tRNAs using S-adenosyl-L-methionine as donor of the methyl groups. This is tRNA (guanine(26)-N(2))-dimethyltransferase from Haloquadratum walsbyi (strain DSM 16790 / HBSQ001).